We begin with the raw amino-acid sequence, 132 residues long: Large ribosomal subunit protein uL14 (132 aa).

The protein belongs to the universal ribosomal protein uL14 family. In terms of assembly, part of the 50S ribosomal subunit. Forms a cluster with proteins L3 and L24e, part of which may contact the 16S rRNA in 2 intersubunit bridges.

Binds to 23S rRNA. Forms part of two intersubunit bridges in the 70S ribosome. The chain is Large ribosomal subunit protein uL14 from Methanococcus maripaludis (strain DSM 14266 / JCM 13030 / NBRC 101832 / S2 / LL).